Here is a 117-residue protein sequence, read N- to C-terminus: Photosystem II reaction center Psb28 protein (117 aa).

Belongs to the Psb28 family. As to quaternary structure, part of the photosystem II complex.

It is found in the cellular thylakoid membrane. This chain is Photosystem II reaction center Psb28 protein, found in Prochlorococcus marinus (strain MIT 9515).